Reading from the N-terminus, the 183-residue chain is ATP-dependent protease subunit HslV (183 aa).

Threonine 13 is an active-site residue. 3 residues coordinate Na(+): glycine 168, cysteine 171, and threonine 174.

The protein belongs to the peptidase T1B family. HslV subfamily. A double ring-shaped homohexamer of HslV is capped on each side by a ring-shaped HslU homohexamer. The assembly of the HslU/HslV complex is dependent on binding of ATP.

The protein localises to the cytoplasm. The catalysed reaction is ATP-dependent cleavage of peptide bonds with broad specificity.. Allosterically activated by HslU binding. In terms of biological role, protease subunit of a proteasome-like degradation complex believed to be a general protein degrading machinery. The chain is ATP-dependent protease subunit HslV from Xylella fastidiosa (strain M23).